The following is a 428-amino-acid chain: ATP-dependent RNA helicase RhlB (428 aa).

Residues 9-37 (KKFSDFALHPKVIEALDNKGFSNCTPIQA) carry the Q motif motif. The region spanning 40–219 (LPFTVEGRDV…FEQMNHAEYI (180 aa)) is the Helicase ATP-binding domain. 53-60 (AQTGTGKT) serves as a coordination point for ATP. A DEAD box motif is present at residues 165-168 (DEAD). A Helicase C-terminal domain is found at 245-390 (RLLQTLLEEE…VSKYNSQALL (146 aa)). Residues 392–428 (DLPAPKRRYRSRSGNHQRRNNLSHRNNTPRNNRKRSG) are disordered. A compositionally biased stretch (basic residues) spans 396–413 (PKRRYRSRSGNHQRRNNL).

It belongs to the DEAD box helicase family. RhlB subfamily. Component of the RNA degradosome, which is a multiprotein complex involved in RNA processing and mRNA degradation.

It is found in the cytoplasm. It carries out the reaction ATP + H2O = ADP + phosphate + H(+). Functionally, DEAD-box RNA helicase involved in RNA degradation. Has RNA-dependent ATPase activity and unwinds double-stranded RNA. The polypeptide is ATP-dependent RNA helicase RhlB (Photorhabdus laumondii subsp. laumondii (strain DSM 15139 / CIP 105565 / TT01) (Photorhabdus luminescens subsp. laumondii)).